The following is a 206-amino-acid chain: Enterobactin synthase component D (206 aa).

3 residues coordinate Mg(2+): aspartate 107, glutamate 109, and glutamate 152.

It belongs to the P-Pant transferase superfamily. EntD family. EntB, EntD, EntE, and EntF form a multienzyme complex called enterobactin synthase. Mg(2+) serves as cofactor.

It localises to the membrane. It carries out the reaction apo-[aryl-carrier protein] + CoA = holo-[aryl-carrier protein] + adenosine 3',5'-bisphosphate + H(+). It catalyses the reaction apo-[peptidyl-carrier protein] + CoA = holo-[peptidyl-carrier protein] + adenosine 3',5'-bisphosphate + H(+). The protein operates within siderophore biosynthesis; enterobactin biosynthesis. In terms of biological role, involved in the biosynthesis of the siderophore enterobactin (enterochelin), which is a macrocyclic trimeric lactone of N-(2,3-dihydroxybenzoyl)-serine. The serine trilactone serves as a scaffolding for the three catechol functionalities that provide hexadentate coordination for the tightly ligated iron(2+) atoms. Plays an essential role in the assembly of the enterobactin by catalyzing the transfer of the 4'-phosphopantetheine (Ppant) moiety from coenzyme A to the apo-domains of both EntB (ArCP domain) and EntF (PCP domain) to yield their holo-forms which make them competent for the activation of 2,3-dihydroxybenzoate (DHB) and L-serine, respectively. In Escherichia coli (strain K12), this protein is Enterobactin synthase component D.